Consider the following 430-residue polypeptide: Serine--tRNA ligase (430 aa).

234–236 (TAE) contacts L-serine. Residue 265–267 (RRE) coordinates ATP. Glu-288 provides a ligand contact to L-serine. ATP is bound at residue 352-355 (EISS). Residue Ser-388 participates in L-serine binding.

It belongs to the class-II aminoacyl-tRNA synthetase family. Type-1 seryl-tRNA synthetase subfamily. Homodimer. The tRNA molecule binds across the dimer.

The protein localises to the cytoplasm. It carries out the reaction tRNA(Ser) + L-serine + ATP = L-seryl-tRNA(Ser) + AMP + diphosphate + H(+). The catalysed reaction is tRNA(Sec) + L-serine + ATP = L-seryl-tRNA(Sec) + AMP + diphosphate + H(+). The protein operates within aminoacyl-tRNA biosynthesis; selenocysteinyl-tRNA(Sec) biosynthesis; L-seryl-tRNA(Sec) from L-serine and tRNA(Sec): step 1/1. In terms of biological role, catalyzes the attachment of serine to tRNA(Ser). Is also able to aminoacylate tRNA(Sec) with serine, to form the misacylated tRNA L-seryl-tRNA(Sec), which will be further converted into selenocysteinyl-tRNA(Sec). This is Serine--tRNA ligase from Thermosynechococcus vestitus (strain NIES-2133 / IAM M-273 / BP-1).